The sequence spans 72 residues: DNA gyrase inhibitor YacG (72 aa).

Positions 17, 20, 32, and 36 each coordinate Zn(2+). Residues 52 to 72 form a disordered region; sequence PGPEEDEMSYPPHSNDGNRSR.

Belongs to the DNA gyrase inhibitor YacG family. Interacts with GyrB. Requires Zn(2+) as cofactor.

Functionally, inhibits all the catalytic activities of DNA gyrase by preventing its interaction with DNA. Acts by binding directly to the C-terminal domain of GyrB, which probably disrupts DNA binding by the gyrase. This is DNA gyrase inhibitor YacG from Methylorubrum extorquens (strain CM4 / NCIMB 13688) (Methylobacterium extorquens).